We begin with the raw amino-acid sequence, 120 residues long: Large ribosomal subunit protein uL18 (120 aa).

This sequence belongs to the universal ribosomal protein uL18 family. In terms of assembly, part of the 50S ribosomal subunit; part of the 5S rRNA/L5/L18/L25 subcomplex. Contacts the 5S and 23S rRNAs.

This is one of the proteins that bind and probably mediate the attachment of the 5S RNA into the large ribosomal subunit, where it forms part of the central protuberance. This Halalkalibacterium halodurans (strain ATCC BAA-125 / DSM 18197 / FERM 7344 / JCM 9153 / C-125) (Bacillus halodurans) protein is Large ribosomal subunit protein uL18.